Here is a 588-residue protein sequence, read N- to C-terminus: Proteasome-associated ATPase (588 aa).

Positions 1 to 10 (MAAHDDDMNR) are enriched in basic and acidic residues. The disordered stretch occupies residues 1-23 (MAAHDDDMNRGIRPGRGSDDPAG). A coiled-coil region spans residues 47 to 94 (RILEERIVELQTNLAGVSAQNERLANTLREARDQIVALKEEVDRLAQP). ATP is bound at residue 276–281 (GCGKTL). The interval 587–588 (YL) is docks into pockets in the proteasome alpha-ring.

It belongs to the AAA ATPase family. Homohexamer. Assembles into a hexameric ring structure that caps the 20S proteasome core. Strongly interacts with the prokaryotic ubiquitin-like protein Pup through a hydrophobic interface; the interacting region of ARC lies in its N-terminal coiled-coil domain. There is one Pup binding site per ARC hexamer ring. Upon ATP-binding, the C-terminus of ARC interacts with the alpha-rings of the proteasome core, possibly by binding to the intersubunit pockets.

Its pathway is protein degradation; proteasomal Pup-dependent pathway. Its function is as follows. ATPase which is responsible for recognizing, binding, unfolding and translocation of pupylated proteins into the bacterial 20S proteasome core particle. May be essential for opening the gate of the 20S proteasome via an interaction with its C-terminus, thereby allowing substrate entry and access to the site of proteolysis. Thus, the C-termini of the proteasomal ATPase may function like a 'key in a lock' to induce gate opening and therefore regulate proteolysis. The protein is Proteasome-associated ATPase of Streptomyces avermitilis (strain ATCC 31267 / DSM 46492 / JCM 5070 / NBRC 14893 / NCIMB 12804 / NRRL 8165 / MA-4680).